The chain runs to 718 residues: DNA topoisomerase 1 (718 aa).

Residues 9–151 enclose the Toprim domain; sequence HEVIICEKPK…KFSTLTREEI (143 aa). Positions 15 and 113 each coordinate Mg(2+). A Topo IA-type catalytic domain is found at 162-571; that stretch reads DYGQVDSGAA…EAITEVRSIL (410 aa). An interaction with DNA region spans residues 202 to 207; it reads SAGRVQ. The active-site O-(5'-phospho-DNA)-tyrosine intermediate is the Y320. The span at 361–371 shows a compositional bias: basic and acidic residues; it reads HEGKKEDDAHP. The segment at 361-380 is disordered; that stretch reads HEGKKEDDAHPAIHPTGLLP. C4-type zinc fingers lie at residues 598–626 and 680–706; these read CPAC…YPDC and CPEC…FPKC.

This sequence belongs to the type IA topoisomerase family. As to quaternary structure, monomer. Mg(2+) is required as a cofactor.

It catalyses the reaction ATP-independent breakage of single-stranded DNA, followed by passage and rejoining.. Releases the supercoiling and torsional tension of DNA, which is introduced during the DNA replication and transcription, by transiently cleaving and rejoining one strand of the DNA duplex. Introduces a single-strand break via transesterification at a target site in duplex DNA. The scissile phosphodiester is attacked by the catalytic tyrosine of the enzyme, resulting in the formation of a DNA-(5'-phosphotyrosyl)-enzyme intermediate and the expulsion of a 3'-OH DNA strand. The free DNA strand then undergoes passage around the unbroken strand, thus removing DNA supercoils. Finally, in the religation step, the DNA 3'-OH attacks the covalent intermediate to expel the active-site tyrosine and restore the DNA phosphodiester backbone. This Methanothermobacter thermautotrophicus (strain ATCC 29096 / DSM 1053 / JCM 10044 / NBRC 100330 / Delta H) (Methanobacterium thermoautotrophicum) protein is DNA topoisomerase 1.